A 352-amino-acid chain; its full sequence is Biotin synthase (352 aa).

Residues 44-262 (NRVQVSTLLS…LAVARILMPK (219 aa)) enclose the Radical SAM core domain. [4Fe-4S] cluster is bound by residues Cys-59, Cys-63, and Cys-66. Residues Cys-103, Cys-134, Cys-194, and Arg-266 each contribute to the [2Fe-2S] cluster site.

Belongs to the radical SAM superfamily. Biotin synthase family. Homodimer. Requires [4Fe-4S] cluster as cofactor. [2Fe-2S] cluster serves as cofactor.

The catalysed reaction is (4R,5S)-dethiobiotin + (sulfur carrier)-SH + 2 reduced [2Fe-2S]-[ferredoxin] + 2 S-adenosyl-L-methionine = (sulfur carrier)-H + biotin + 2 5'-deoxyadenosine + 2 L-methionine + 2 oxidized [2Fe-2S]-[ferredoxin]. It functions in the pathway cofactor biosynthesis; biotin biosynthesis; biotin from 7,8-diaminononanoate: step 2/2. Functionally, catalyzes the conversion of dethiobiotin (DTB) to biotin by the insertion of a sulfur atom into dethiobiotin via a radical-based mechanism. The protein is Biotin synthase of Pseudomonas syringae pv. syringae (strain B728a).